The sequence spans 470 residues: Dendritic cell-specific transmembrane protein (470 aa).

The Cytoplasmic segment spans residues 1-33; it reads MRLWTLGTSIFLRLWGTYVFPRSPSWLDFIQHL. The chain crosses the membrane as a helical span at residues 34–54; sequence GVCCFVAFLSVSLFSAAFYWI. Leu55 is a topological domain (extracellular). The helical transmembrane segment at 56-76 threads the bilayer; it reads PPVALLSSVWMITCVFLCCSK. The Cytoplasmic segment spans residues 77–97; it reads RARCFILLAVLSCGLREGRNA. The chain crosses the membrane as a helical span at residues 98-118; the sequence is LIAAGTGVVIFGHVENIFYNF. At 119–209 the chain is on the extracellular side; sequence RGLLDSMTCN…MVVTTELLTS (91 aa). Residues 210–230 form a helical membrane-spanning segment; that stretch reads VGQKLLALAGLLLILVSTGLF. Residues 231–292 lie on the Cytoplasmic side of the membrane; the sequence is LKRFLGPCGW…LQLTPKEKKT (62 aa). The chain crosses the membrane as a helical span at residues 293 to 313; it reads LGLFFLPVLTYLYMWVLFAAV. Residues 314–376 are Extracellular-facing; it reads DYLLYRLISS…PKPRLSVSET (63 aa). Residues 377-397 traverse the membrane as a helical segment; the sequence is WVPLSIILLTLIILGLLSSML. Over 398-470 the chain is Cytoplasmic; sequence MQLKILVSVS…QTIPANEDDL (73 aa).

Interacts with CREB3. Monomer. Homodimer. Isoform 1 interacts (via the C-terminus cytoplasmic tail) with OS9 isoform 1 (via the C-terminus tail); the interaction induces DCSTAMP redistribution to the endoplasmic reticulum-Golgi intermediate compartment. Isoform 1 interacts (via the C-terminus cytoplasmic tail) with OS9 isoform 2 (via the C-terminus tail). Post-translationally, glycosylated. Expressed in macrophages and bone marrow dendritic cells (BM-DC). Weakly expressed in the spleen and lymph node. Highly expressed in multi-nuclear osteoclasts compared to mono-nuclear macrophages. Expressed in foreign body giant cells (FBGCs). Isoform 1 and isoform 2 are expressed in osteoclasts.

Its subcellular location is the cell membrane. The protein localises to the endoplasmic reticulum membrane. It localises to the endoplasmic reticulum-Golgi intermediate compartment membrane. It is found in the endosome. In terms of biological role, probable cell surface receptor that plays several roles in cellular fusion, cell differentiation, bone and immune homeostasis. Plays a role in TNFSF11-mediated osteoclastogenesis. Cooperates with OCSTAMP in modulating cell-cell fusion in both osteoclasts and foreign body giant cells (FBGCs). Participates in osteoclast bone resorption. Involved in inducing the expression of tartrate-resistant acid phosphatase in osteoclast precursors. Plays a role in haematopoietic stem cell differentiation of bone marrow cells toward the myeloid lineage. Inhibits the development of neutrophilic granulocytes. Plays also a role in the regulation of dendritic cell (DC) antigen presentation activity by controlling phagocytic activity. Involved in the maintenance of immune self-tolerance and avoidance of autoimmune reactions. This chain is Dendritic cell-specific transmembrane protein (Dcstamp), found in Mus musculus (Mouse).